Reading from the N-terminus, the 341-residue chain is S-adenosylmethionine:tRNA ribosyltransferase-isomerase (341 aa).

The protein belongs to the QueA family. In terms of assembly, monomer.

It is found in the cytoplasm. The catalysed reaction is 7-aminomethyl-7-carbaguanosine(34) in tRNA + S-adenosyl-L-methionine = epoxyqueuosine(34) in tRNA + adenine + L-methionine + 2 H(+). It participates in tRNA modification; tRNA-queuosine biosynthesis. Functionally, transfers and isomerizes the ribose moiety from AdoMet to the 7-aminomethyl group of 7-deazaguanine (preQ1-tRNA) to give epoxyqueuosine (oQ-tRNA). This Chlorobium luteolum (strain DSM 273 / BCRC 81028 / 2530) (Pelodictyon luteolum) protein is S-adenosylmethionine:tRNA ribosyltransferase-isomerase.